A 246-amino-acid polypeptide reads, in one-letter code: DNA repair protein RecO (246 aa).

The protein belongs to the RecO family.

In terms of biological role, involved in DNA repair and RecF pathway recombination. The sequence is that of DNA repair protein RecO from Nitrosococcus oceani (strain ATCC 19707 / BCRC 17464 / JCM 30415 / NCIMB 11848 / C-107).